Reading from the N-terminus, the 195-residue chain is HTH-type transcriptional regulator BetI (195 aa).

One can recognise an HTH tetR-type domain in the interval 8 to 68 (SIRRRQLIDA…ATMRDITSQL (61 aa)). Residues 31 to 50 (TIAQIARRAGVSTGIISHYF) constitute a DNA-binding region (H-T-H motif).

The protein operates within amine and polyamine biosynthesis; betaine biosynthesis via choline pathway [regulation]. Its function is as follows. Repressor involved in the biosynthesis of the osmoprotectant glycine betaine. It represses transcription of the choline transporter BetT and the genes of BetAB involved in the synthesis of glycine betaine. The chain is HTH-type transcriptional regulator BetI from Escherichia coli O127:H6 (strain E2348/69 / EPEC).